The chain runs to 439 residues: Xylose isomerase (439 aa).

Catalysis depends on residues His101 and Asp104. Mg(2+) is bound by residues Glu232, Glu268, His271, Asp296, Asp307, Asp309, and Asp339.

The protein belongs to the xylose isomerase family. As to quaternary structure, homotetramer. Mg(2+) serves as cofactor.

The protein localises to the cytoplasm. The catalysed reaction is alpha-D-xylose = alpha-D-xylulofuranose. The polypeptide is Xylose isomerase (Marinomonas sp. (strain MWYL1)).